The primary structure comprises 142 residues: Large ribosomal subunit protein uL13 (142 aa).

The protein belongs to the universal ribosomal protein uL13 family. As to quaternary structure, part of the 50S ribosomal subunit.

Functionally, this protein is one of the early assembly proteins of the 50S ribosomal subunit, although it is not seen to bind rRNA by itself. It is important during the early stages of 50S assembly. This is Large ribosomal subunit protein uL13 from Coxiella burnetii (strain CbuG_Q212) (Coxiella burnetii (strain Q212)).